Here is a 375-residue protein sequence, read N- to C-terminus: Erythronate-4-phosphate dehydrogenase (375 aa).

Ser-49 is a binding site for substrate. NAD(+) contacts are provided by Asp-150 and Thr-178. Arg-211 is an active-site residue. Asp-231 contributes to the NAD(+) binding site. Glu-236 is a catalytic residue. His-253 (proton donor) is an active-site residue. An NAD(+)-binding site is contributed by Gly-256.

This sequence belongs to the D-isomer specific 2-hydroxyacid dehydrogenase family. PdxB subfamily. In terms of assembly, homodimer.

The protein resides in the cytoplasm. It carries out the reaction 4-phospho-D-erythronate + NAD(+) = (R)-3-hydroxy-2-oxo-4-phosphooxybutanoate + NADH + H(+). It participates in cofactor biosynthesis; pyridoxine 5'-phosphate biosynthesis; pyridoxine 5'-phosphate from D-erythrose 4-phosphate: step 2/5. Its function is as follows. Catalyzes the oxidation of erythronate-4-phosphate to 3-hydroxy-2-oxo-4-phosphonooxybutanoate. This chain is Erythronate-4-phosphate dehydrogenase, found in Hydrogenovibrio crunogenus (strain DSM 25203 / XCL-2) (Thiomicrospira crunogena).